A 490-amino-acid chain; its full sequence is Betaine aldehyde dehydrogenase (490 aa).

The K(+) site is built by Thr-26, Ile-27, and Asp-93. 150–152 contributes to the NAD(+) binding site; that stretch reads GAW. Catalysis depends on Lys-162, which acts as the Charge relay system. 176 to 179 serves as a coordination point for NAD(+); it reads KPSE. Val-180 serves as a coordination point for K(+). 230 to 233 provides a ligand contact to NAD(+); it reads GVAS. Leu-246 is a binding site for K(+). The active-site Proton acceptor is Glu-252. Gly-254, Cys-286, and Glu-387 together coordinate NAD(+). The active-site Nucleophile is Cys-286. Position 286 is a cysteine sulfenic acid (-SOH) (Cys-286). 2 residues coordinate K(+): Lys-457 and Gly-460. Glu-464 serves as the catalytic Charge relay system.

It belongs to the aldehyde dehydrogenase family. As to quaternary structure, dimer of dimers. K(+) is required as a cofactor.

It carries out the reaction betaine aldehyde + NAD(+) + H2O = glycine betaine + NADH + 2 H(+). It participates in amine and polyamine biosynthesis; betaine biosynthesis via choline pathway; betaine from betaine aldehyde: step 1/1. Involved in the biosynthesis of the osmoprotectant glycine betaine. Catalyzes the irreversible oxidation of betaine aldehyde to the corresponding acid. In Escherichia coli O8 (strain IAI1), this protein is Betaine aldehyde dehydrogenase.